Here is a 215-residue protein sequence, read N- to C-terminus: Pyrrolidone-carboxylate peptidase (215 aa).

Catalysis depends on residues Glu-80, Cys-143, and His-167.

Belongs to the peptidase C15 family. Homotetramer.

Its subcellular location is the cytoplasm. It carries out the reaction Release of an N-terminal pyroglutamyl group from a polypeptide, the second amino acid generally not being Pro.. Functionally, removes 5-oxoproline from various penultimate amino acid residues except L-proline. This chain is Pyrrolidone-carboxylate peptidase, found in Bacillus thuringiensis (strain Al Hakam).